The following is a 114-amino-acid chain: Iron-sulfur cluster insertion protein ErpA (114 aa).

Residues Cys-42, Cys-106, and Cys-108 each coordinate iron-sulfur cluster.

It belongs to the HesB/IscA family. As to quaternary structure, homodimer. It depends on iron-sulfur cluster as a cofactor.

In terms of biological role, required for insertion of 4Fe-4S clusters for at least IspG. The sequence is that of Iron-sulfur cluster insertion protein ErpA from Yersinia pseudotuberculosis serotype O:1b (strain IP 31758).